We begin with the raw amino-acid sequence, 277 residues long: Phosphatidylglycerol--prolipoprotein diacylglyceryl transferase (277 aa).

A run of 4 helical transmembrane segments spans residues 18–38 (ISVK…LLLA), 51–71 (IIVD…RIYY), 89–109 (IWHG…TAII), and 116–136 (ISFW…QAIG). R137 serves as a coordination point for a 1,2-diacyl-sn-glycero-3-phospho-(1'-sn-glycerol). The next 3 membrane-spanning stretches (helical) occupy residues 177-197 (QPTF…LLII), 205-225 (GELF…IEGM), and 235-255 (FRVS…IIIY).

This sequence belongs to the Lgt family.

The protein resides in the cell membrane. The catalysed reaction is L-cysteinyl-[prolipoprotein] + a 1,2-diacyl-sn-glycero-3-phospho-(1'-sn-glycerol) = an S-1,2-diacyl-sn-glyceryl-L-cysteinyl-[prolipoprotein] + sn-glycerol 1-phosphate + H(+). The protein operates within protein modification; lipoprotein biosynthesis (diacylglyceryl transfer). Its function is as follows. Catalyzes the transfer of the diacylglyceryl group from phosphatidylglycerol to the sulfhydryl group of the N-terminal cysteine of a prolipoprotein, the first step in the formation of mature lipoproteins. The polypeptide is Phosphatidylglycerol--prolipoprotein diacylglyceryl transferase (Listeria monocytogenes serotype 4a (strain HCC23)).